Consider the following 377-residue polypeptide: N-acetyldiaminopimelate deacetylase (377 aa).

Aspartate 70 is a catalytic residue. The active-site Proton acceptor is the glutamate 129.

It belongs to the peptidase M20A family. N-acetyldiaminopimelate deacetylase subfamily.

The catalysed reaction is N-acetyl-(2S,6S)-2,6-diaminopimelate + H2O = (2S,6S)-2,6-diaminopimelate + acetate. It functions in the pathway amino-acid biosynthesis; L-lysine biosynthesis via DAP pathway; LL-2,6-diaminopimelate from (S)-tetrahydrodipicolinate (acetylase route): step 3/3. Catalyzes the conversion of N-acetyl-diaminopimelate to diaminopimelate and acetate. The polypeptide is N-acetyldiaminopimelate deacetylase (Streptococcus thermophilus (strain ATCC BAA-491 / LMD-9)).